Here is a 420-residue protein sequence, read N- to C-terminus: Probable 3-isopropylmalate dehydratase large subunit (420 aa).

3 residues coordinate [4Fe-4S] cluster: Cys-301, Cys-361, and Cys-364.

This sequence belongs to the aconitase/IPM isomerase family. LeuC type 2 subfamily. As to quaternary structure, heterodimer of LeuC and LeuD. [4Fe-4S] cluster is required as a cofactor.

It carries out the reaction (2R,3S)-3-isopropylmalate = (2S)-2-isopropylmalate. The protein operates within amino-acid biosynthesis; L-leucine biosynthesis; L-leucine from 3-methyl-2-oxobutanoate: step 2/4. Functionally, catalyzes the isomerization between 2-isopropylmalate and 3-isopropylmalate, via the formation of 2-isopropylmaleate. The sequence is that of Probable 3-isopropylmalate dehydratase large subunit from Methanosarcina mazei (strain ATCC BAA-159 / DSM 3647 / Goe1 / Go1 / JCM 11833 / OCM 88) (Methanosarcina frisia).